The following is a 233-amino-acid chain: Rab-like protein 3 (233 aa).

The interval 1–233 is small GTPase-like; it reads MASLDRVKVL…RFNFKSLHSD (233 aa). GTP is bound by residues 16 to 21, 148 to 150, and 179 to 180; these read GVGKSS, KFD, and DC.

Belongs to the small GTPase superfamily. Rab family. In terms of assembly, homodimer.

In terms of biological role, required for KRAS signaling regulation and modulation of cell proliferation. Regulator of KRAS prenylation, and probably prenylation of other small GTPases. Required for lymphocyte development and function. Not required for myeloid cell development. In Danio rerio (Zebrafish), this protein is Rab-like protein 3 (rabl3).